Here is a 785-residue protein sequence, read N- to C-terminus: Cadherin-7 (785 aa).

An N-terminal signal peptide occupies residues Met1 to Ala27. Residues Glu28–Arg47 constitute a propeptide that is removed on maturation. At Glu28–Thr607 the chain is on the extracellular side. Cadherin domains follow at residues Trp49–Phe153, Leu154–Phe262, Pro263–Phe377, Ser378–Phe482, and Phe482–Tyr599. N-linked (GlcNAc...) asparagine glycosylation is found at Asn449 and Asn530. Residues Gly608 to Val628 traverse the membrane as a helical segment. The Cytoplasmic portion of the chain corresponds to Thr629–Ser785.

The protein resides in the cell membrane. Functionally, cadherins are calcium-dependent cell adhesion proteins. They preferentially interact with themselves in a homophilic manner in connecting cells; cadherins may thus contribute to the sorting of heterogeneous cell types. In Homo sapiens (Human), this protein is Cadherin-7 (CDH7).